Reading from the N-terminus, the 485-residue chain is Peptidyl-prolyl cis-trans isomerase-like 4 (485 aa).

A PPIase cyclophilin-type domain is found at 1-172 (MSVLLETSAG…IDIRIKHTVI (172 aa)). An RRM domain is found at 251–329 (NVLFVCKLNP…RRIHVDFSQS (79 aa)). The segment at 377 to 485 (NYRMVYGEEE…RDENDRRSRR (109 aa)) is disordered. Residues 426-485 (RPRDRSRDRYHKPRDDRRGDRRDRDRRDQDRNRYRDRDHRDRGREKDRYGRDENDRRSRR) show a composition bias toward basic and acidic residues.

This sequence belongs to the cyclophilin-type PPIase family. PPIL4 subfamily.

Its subcellular location is the nucleus. The catalysed reaction is [protein]-peptidylproline (omega=180) = [protein]-peptidylproline (omega=0). Functionally, PPIases accelerate the folding of proteins. It catalyzes the cis-trans isomerization of proline imidic peptide bonds in oligopeptides. The sequence is that of Peptidyl-prolyl cis-trans isomerase-like 4 (CYP6) from Gibberella zeae (strain ATCC MYA-4620 / CBS 123657 / FGSC 9075 / NRRL 31084 / PH-1) (Wheat head blight fungus).